The primary structure comprises 109 residues: UPF0060 membrane protein PA3275 (109 aa).

4 helical membrane passes run Phe-5–Leu-25, Leu-27–Leu-47, Ala-59–Glu-79, and Leu-84–Gly-104.

The protein belongs to the UPF0060 family.

It is found in the cell inner membrane. The polypeptide is UPF0060 membrane protein PA3275 (Pseudomonas aeruginosa (strain ATCC 15692 / DSM 22644 / CIP 104116 / JCM 14847 / LMG 12228 / 1C / PRS 101 / PAO1)).